A 903-amino-acid chain; its full sequence is Valine--tRNA ligase (903 aa).

Over residues 1 to 15 the composition is skewed to polar residues; that stretch reads MVCVTDQNNENPSQN. The tract at residues 1–22 is disordered; the sequence is MVCVTDQNNENPSQNRADKLPK. The 'HIGH' region signature appears at 61 to 71; it reads PNVTGQLHMGH. The 'KMSKS' region motif lies at 552–556; sequence KMSKS. ATP is bound at residue Lys-555. Residues 836 to 902 are a coiled coil; sequence TVDVAAERKR…ERITKRLEEL (67 aa).

Belongs to the class-I aminoacyl-tRNA synthetase family. ValS type 1 subfamily. As to quaternary structure, monomer.

Its subcellular location is the cytoplasm. The catalysed reaction is tRNA(Val) + L-valine + ATP = L-valyl-tRNA(Val) + AMP + diphosphate. Functionally, catalyzes the attachment of valine to tRNA(Val). As ValRS can inadvertently accommodate and process structurally similar amino acids such as threonine, to avoid such errors, it has a 'posttransfer' editing activity that hydrolyzes mischarged Thr-tRNA(Val) in a tRNA-dependent manner. This chain is Valine--tRNA ligase, found in Corynebacterium efficiens (strain DSM 44549 / YS-314 / AJ 12310 / JCM 11189 / NBRC 100395).